The following is a 468-amino-acid chain: PE family protein PE3 (468 aa).

Residues 1–92 enclose the PE domain; that stretch reads MSYVIAAPEM…AGAAYAQAEA (92 aa). The region spanning 154–375 is the PE-PPE domain; it reads PVAQYTPEQW…DLRVLVDLGY (222 aa).

It belongs to the mycobacterial PE family.

It is found in the secreted. It localises to the cell wall. Functionally, plays significant roles in mycobacterial persistence during infection and modulates host immune response. The polypeptide is PE family protein PE3 (Mycobacterium tuberculosis (strain ATCC 25618 / H37Rv)).